The primary structure comprises 328 residues: Olfactory receptor 13A1 (328 aa).

Residues 1–43 (MKLWMESHLIVPETRPSPRMMSNQTLVTEFILQGFSEHPEYRV) lie on the Extracellular side of the membrane. Asn23 carries N-linked (GlcNAc...) asparagine glycosylation. Residues 44-64 (FLFSCFLFLYSGALTGNVLIT) form a helical membrane-spanning segment. Topologically, residues 65–72 (LAITFNPG) are cytoplasmic. Residues 73–93 (LHAPMYFFLLNLATMDIICTS) traverse the membrane as a helical segment. At 94-117 (SIMPKALASLVSEESSISYGGCMA) the chain is on the extracellular side. An intrachain disulfide couples Cys115 to Cys207. Residues 118-138 (QLYFLTWAASSELLLLTVMAY) form a helical membrane-spanning segment. At 139–157 (DRYAAICHPLHYSSMMSKV) the chain is on the cytoplasmic side. The helical transmembrane segment at 158 to 178 (FCSGLATAVWLLCAVNTAIHT) threads the bilayer. Residues 179–215 (GLMLRLDFCGPNVIIHFFCEVPPLLLLSCSSTYVNGV) are Extracellular-facing. Residues 216-235 (MIVLADAFYGIVNFLMTIAS) traverse the membrane as a helical segment. Topologically, residues 236–255 (YGFIVSSILKVKTAWGRQKA) are cytoplasmic. A helical transmembrane segment spans residues 256 to 276 (FSTCSSHLTVVCMYYTAVFYA). The Extracellular segment spans residues 277–289 (YISPVSGYSAGKS). The helical transmembrane segment at 290 to 310 (KLAGLLYTVLSPTLNPLIYTL) threads the bilayer. Residues 311–328 (RNKEVKAALRKLFPFFRN) lie on the Cytoplasmic side of the membrane.

It belongs to the G-protein coupled receptor 1 family.

It is found in the cell membrane. In terms of biological role, odorant receptor. This chain is Olfactory receptor 13A1 (OR13A1), found in Homo sapiens (Human).